Consider the following 405-residue polypeptide: Protochlorophyllide reductase A, chloroplastic (405 aa).

The N-terminal 69 residues, 1–69 (MALQAASLVS…LRNNKAIIRA (69 aa)), are a transit peptide targeting the chloroplast.

This sequence belongs to the short-chain dehydrogenases/reductases (SDR) family. POR subfamily. In terms of assembly, forms large complexes including TOC33, pPORA and OEP161 during pPORA import into plastids at the plastid envelope membrane. Interacts with CPP1 during plastid import. As to expression, expressed in young seedlings. Not detected in leaves.

The protein localises to the plastid. It is found in the chloroplast. The catalysed reaction is chlorophyllide a + NADP(+) = protochlorophyllide a + NADPH + H(+). It participates in porphyrin-containing compound metabolism; chlorophyll biosynthesis. Functionally, phototransformation of protochlorophyllide (Pchlide) to chlorophyllide (Chlide). PORA may also function as a photoprotectant during the transitory stage from dark to light. Functions in skotomorphogenesis, photomorphogenesis and throughout the plant life under specific light conditions. This chain is Protochlorophyllide reductase A, chloroplastic (PORA), found in Arabidopsis thaliana (Mouse-ear cress).